Consider the following 440-residue polypeptide: D-serine dehydratase (440 aa).

Lysine 116 is subject to N6-(pyridoxal phosphate)lysine.

Belongs to the serine/threonine dehydratase family. DsdA subfamily. Monomer. The cofactor is pyridoxal 5'-phosphate.

The enzyme catalyses D-serine = pyruvate + NH4(+). The polypeptide is D-serine dehydratase (Salmonella arizonae (strain ATCC BAA-731 / CDC346-86 / RSK2980)).